The following is a 74-amino-acid chain: U-scoloptoxin(09)-Sm3a (74 aa).

Positions 1–22 (MNANSIFLCFFIMLIGCTLTHS) are cleaved as a signal peptide.

This sequence belongs to the scoloptoxin-09 family. In terms of processing, contains 3 disulfide bonds. Expressed by the venom gland.

The protein resides in the secreted. The polypeptide is U-scoloptoxin(09)-Sm3a (Scolopendra morsitans (Tanzanian blue ringleg centipede)).